A 284-amino-acid polypeptide reads, in one-letter code: Bifunctional protein FolD (284 aa).

NADP(+) is bound by residues 165–167, Ser-190, and Ile-231; that span reads GRS.

The protein belongs to the tetrahydrofolate dehydrogenase/cyclohydrolase family. As to quaternary structure, homodimer.

The enzyme catalyses (6R)-5,10-methylene-5,6,7,8-tetrahydrofolate + NADP(+) = (6R)-5,10-methenyltetrahydrofolate + NADPH. It carries out the reaction (6R)-5,10-methenyltetrahydrofolate + H2O = (6R)-10-formyltetrahydrofolate + H(+). The protein operates within one-carbon metabolism; tetrahydrofolate interconversion. Catalyzes the oxidation of 5,10-methylenetetrahydrofolate to 5,10-methenyltetrahydrofolate and then the hydrolysis of 5,10-methenyltetrahydrofolate to 10-formyltetrahydrofolate. The sequence is that of Bifunctional protein FolD from Dechloromonas aromatica (strain RCB).